The primary structure comprises 209 residues: DNA transformation protein TfoX1 (209 aa).

The protein belongs to the Sxy/TfoX family.

Its function is as follows. Required for DNA transformation jointly with TfoY (tfoX2). The polypeptide is DNA transformation protein TfoX1 (Aliivibrio fischeri (strain ATCC 700601 / ES114) (Vibrio fischeri)).